The sequence spans 471 residues: Cytolysin (471 aa).

A signal peptide spans 1–20; the sequence is MKKMTLFTLSLLATAVQVGA. Positions 338-465 constitute a Ricin B-type lectin domain; the sequence is AHVTLQSLSN…EANQARWKPT (128 aa).

It belongs to the HlyA hemolysin family.

In terms of biological role, bacterial hemolysins are exotoxins that attack blood cell membranes and cause cell rupture by mechanisms not clearly defined. This Vibrio vulnificus (strain CMCP6) protein is Cytolysin (vvhA).